The following is a 227-amino-acid chain: uncharacterized protein (227 aa).

In terms of domain architecture, RCK N-terminal spans 3-119; the sequence is RADFCIIGLG…STMGIREALI (117 aa). The RCK C-terminal domain occupies 134-221; sequence HGLENEIINL…LNKYLNYINP (88 aa).

This is an uncharacterized protein from Mycoplasma genitalium (strain ATCC 33530 / DSM 19775 / NCTC 10195 / G37) (Mycoplasmoides genitalium).